The following is a 171-amino-acid chain: Flavodoxin (171 aa).

The region spanning 4–165 (IGIFFGSDTG…RIKQWVKQII (162 aa)) is the Flavodoxin-like domain.

This sequence belongs to the flavodoxin family. The cofactor is FMN.

Low-potential electron donor to a number of redox enzymes. The chain is Flavodoxin (fldA) from Buchnera aphidicola subsp. Acyrthosiphon pisum (strain APS) (Acyrthosiphon pisum symbiotic bacterium).